Reading from the N-terminus, the 246-residue chain is Uridylate kinase (246 aa).

18-21 (KVSG) is an ATP binding site. Position 60 (Gly60) interacts with UMP. Residues Gly61 and Arg65 each coordinate ATP. UMP-binding positions include Asp80 and 141-148 (TGNPFFTT). Residues Thr168, Gln169, Tyr174, and Asp177 each coordinate ATP.

The protein belongs to the UMP kinase family. As to quaternary structure, homohexamer.

Its subcellular location is the cytoplasm. It carries out the reaction UMP + ATP = UDP + ADP. Its pathway is pyrimidine metabolism; CTP biosynthesis via de novo pathway; UDP from UMP (UMPK route): step 1/1. Inhibited by UTP. Its function is as follows. Catalyzes the reversible phosphorylation of UMP to UDP. The sequence is that of Uridylate kinase from Gluconobacter oxydans (strain 621H) (Gluconobacter suboxydans).